The following is a 159-amino-acid chain: Cell number regulator 4 (159 aa).

Residues 52-74 (LAGLLYCLLLHAGVAVVPCHCIY) form a helical membrane-spanning segment.

This sequence belongs to the cornifelin family. Expressed in roots, coleoptiles, leaves, stalks, apical meristems, immature ears, endosperm, pericarp and tassel spikelets.

Its subcellular location is the membrane. The protein is Cell number regulator 4 (CNR4) of Zea mays (Maize).